Reading from the N-terminus, the 1919-residue chain is Transcription initiation factor TFIID subunit 1 (1919 aa).

2 disordered regions span residues 1 to 25 (MAES…EDNS) and 143 to 169 (DDED…TEKR). The span at 143-158 (DDEDYDEEEEQEEEQA) shows a compositional bias: acidic residues. Residues 661–737 (MKIIVKSLGG…VHLIRTKVHL (77 aa)) enclose the Ubiquitin-like domain. 3 disordered regions span residues 1287 to 1314 (DQKK…NIAL), 1408 to 1679 (MRTN…RPKE), and 1726 to 1746 (RSER…KKKL). 3 stretches are compositionally biased toward basic and acidic residues: residues 1465–1476 (SVDEALKGDKLS), 1535–1547 (KPKE…ERRS), and 1555–1565 (SRERGESESHK). The segment covering 1566–1587 (PSVSGQPLSSTERNQAASSRHT) has biased composition (polar residues). Basic and acidic residues predominate over residues 1628 to 1655 (RSKEMNDHDMSSLEESPRFESRKTKRMA). The segment covering 1661-1671 (QRQQSFRLSEN) has biased composition (polar residues). Positions 1713-1750 (NEIAEIRRYEEVIRSEREEEERQKAKKKKKKKKLQPEI) form a coiled coil. A compositionally biased stretch (basic and acidic residues) spans 1726–1735 (RSEREEEERQ). Positions 1736–1745 (KAKKKKKKKK) are enriched in basic residues. In terms of domain architecture, Bromo spans 1794–1911 (KRRKKGEVGL…DDYEDQLKEA (118 aa)).

The protein belongs to the TAF1 family. Component of the TFIID complex. TFIID is composed of TATA binding protein (TBP) and a number of TBP-associated factors (TAFs) whose MWs range from 14-217 kDa. Interacts with TAF7 and TAF14B, and (via N-terminus) with TBP1 and TBP2. In terms of tissue distribution, expressed in roots, leaves and inflorescences.

Its subcellular location is the nucleus. TAFs are components of the transcription factor IID (TFIID) complex that is essential for mediating regulation of RNA polymerase transcription. Core scaffold of the TFIID complex. The polypeptide is Transcription initiation factor TFIID subunit 1 (TAF1) (Arabidopsis thaliana (Mouse-ear cress)).